The following is a 224-amino-acid chain: Cytochrome c biogenesis ATP-binding export protein CcmA (224 aa).

The 220-residue stretch at 1–220 folds into the ABC transporter domain; it reads MQNAEAAPAL…EYAHAEVVGA (220 aa). Residue 40–47 coordinates ATP; sequence GANGSGKT.

The protein belongs to the ABC transporter superfamily. CcmA exporter (TC 3.A.1.107) family. In terms of assembly, the complex is composed of two ATP-binding proteins (CcmA) and two transmembrane proteins (CcmB).

It localises to the cell inner membrane. It carries out the reaction heme b(in) + ATP + H2O = heme b(out) + ADP + phosphate + H(+). Functionally, part of the ABC transporter complex CcmAB involved in the biogenesis of c-type cytochromes; once thought to export heme, this seems not to be the case, but its exact role is uncertain. Responsible for energy coupling to the transport system. This Bordetella parapertussis (strain 12822 / ATCC BAA-587 / NCTC 13253) protein is Cytochrome c biogenesis ATP-binding export protein CcmA.